The chain runs to 449 residues: Tubulin alpha chain (449 aa).

GTP is bound at residue Gln-11. Lys-40 is modified (N6-acetyllysine). The GTP site is built by Glu-71, Ser-140, Gly-144, Thr-145, Thr-179, Asn-206, and Asn-228. Glu-71 is a Mg(2+) binding site. Glu-254 is an active-site residue.

It belongs to the tubulin family. Dimer of alpha and beta chains. A typical microtubule is a hollow water-filled tube with an outer diameter of 25 nm and an inner diameter of 15 nM. Alpha-beta heterodimers associate head-to-tail to form protofilaments running lengthwise along the microtubule wall with the beta-tubulin subunit facing the microtubule plus end conferring a structural polarity. Microtubules usually have 13 protofilaments but different protofilament numbers can be found in some organisms and specialized cells. Mg(2+) serves as cofactor. Post-translationally, undergoes a tyrosination/detyrosination cycle, the cyclic removal and re-addition of a C-terminal tyrosine residue by the enzymes tubulin tyrosine carboxypeptidase (TTCP) and tubulin tyrosine ligase (TTL), respectively. Acetylation of alpha chains at Lys-40 stabilizes microtubules and affects affinity and processivity of microtubule motors. This modification has a role in multiple cellular functions, ranging from cell motility, cell cycle progression or cell differentiation to intracellular trafficking and signaling.

Its subcellular location is the cytoplasm. The protein localises to the cytoskeleton. The catalysed reaction is GTP + H2O = GDP + phosphate + H(+). Functionally, tubulin is the major constituent of microtubules, a cylinder consisting of laterally associated linear protofilaments composed of alpha- and beta-tubulin heterodimers. Microtubules grow by the addition of GTP-tubulin dimers to the microtubule end, where a stabilizing cap forms. Below the cap, tubulin dimers are in GDP-bound state, owing to GTPase activity of alpha-tubulin. This Tetrahymena pyriformis protein is Tubulin alpha chain.